Here is a 3919-residue protein sequence, read N- to C-terminus: Intermembrane lipid transfer protein Vps13D (3919 aa).

Residues 4-114 enclose the Chorein N-terminal domain; sequence DLITWVLNTY…QDLEYKLAVL (111 aa). Positions 706-736 are disordered; it reads TSDDDETYLTPCSTPPASEKSGSESPTLLEN. The UBA domain occupies 2292 to 2334; it reads KADSDLEKAAPLVAMGFEISDCLYAMQINNWRINDAAIWLSQQ. An SHR-BD domain is found at 2837–3113; it reads ELYISAPVWI…YVMDDPLGQQ (277 aa). The disordered stretch occupies residues 3749 to 3768; sequence VRETSRDSHRNAPERKRLPR. A compositionally biased stretch (basic and acidic residues) spans 3751 to 3764; sequence ETSRDSHRNAPERK.

The protein belongs to the VPS13 family. Expressed in intestinal cells (at protein level).

The protein localises to the cytoplasm. It is found in the lysosome. Functionally, mediates the transfer of lipids between membranes at organelle contact sites. Functions in promoting mitochondrial clearance by mitochondrial autophagy (mitophagy), also possibly by positively regulating mitochondrial fission. Mitophagy plays an important role in regulating cell health and mitochondrial size and homeostasis. The chain is Intermembrane lipid transfer protein Vps13D from Drosophila melanogaster (Fruit fly).